Reading from the N-terminus, the 466-residue chain is Muscarinic acetylcholine receptor M2 (466 aa).

Over 1-22 the chain is Extracellular; sequence MNNSTNSSNSGLALTSPYKTFE. Residues N2, N3, and N6 are each glycosylated (N-linked (GlcNAc...) asparagine). The chain crosses the membrane as a helical span at residues 23–45; sequence VVFIVLVAGSLSLVTIIGNILVM. Residues 46–59 lie on the Cytoplasmic side of the membrane; sequence VSIKVNRHLQTVNN. A helical transmembrane segment spans residues 60-80; that stretch reads YFLFSLACADLIIGVFSMNLY. The Extracellular portion of the chain corresponds to 81–97; it reads TLYTVIGYWPLGPVVCD. An intrachain disulfide couples C96 to C176. The helical transmembrane segment at 98-119 threads the bilayer; sequence LWLALDYVVSNASVMNLLIISF. Residues 120–122 carry the Important for signaling motif; the sequence is DRY. Residues 120–139 are Cytoplasmic-facing; sequence DRYFCVTKPLTYPVKRTTKM. A helical membrane pass occupies residues 140–162; that stretch reads AGMMIAAAWVLSFILWAPAILFW. The Extracellular segment spans residues 163-184; it reads QFIVGVRTVEDGECYIQFFSNA. The chain crosses the membrane as a helical span at residues 185 to 209; sequence AVTFGTAIAAFYLPVIIMTVLYWHI. The Cytoplasmic segment spans residues 210–387; the sequence is SRASKSRIKK…PPSREKKVTR (178 aa). The tract at residues 218 to 320 is disordered; it reads KKDKKEPVAN…SLGHSKDENS (103 aa). S232 is subject to Phosphoserine. A compositionally biased stretch (basic and acidic residues) spans 254–270; sequence ALEHNKIQNGKAPRDAV. Composition is skewed to polar residues over residues 284–293 and 304–313; these read NDSTSVSAVA and DENTVSTSLG. The chain crosses the membrane as a helical span at residues 388–410; that stretch reads TILAILLAFIITWAPYNVMVLIN. Over 411 to 418 the chain is Extracellular; the sequence is TFCAPCIP. Residues C413 and C416 are joined by a disulfide bond. A helical transmembrane segment spans residues 419–442; the sequence is NTVWTIGYWLCYINSTINPACYAL. Residues 436 to 440 carry the Important for signaling motif; it reads NPACY. At 443–466 the chain is on the cytoplasmic side; that stretch reads CNATFKKTFKHLLMCHYKNIGATR. A phosphothreonine mark is found at T446, T450, and T465.

The protein belongs to the G-protein coupled receptor 1 family. Muscarinic acetylcholine receptor subfamily. CHRM2 sub-subfamily. In terms of assembly, interacts with ARRB1 and ARRB2. Interacts with RACK1; the interaction regulates CHRM2 internalization. Post-translationally, phosphorylated in response to agonist treatment.

It localises to the cell membrane. It is found in the postsynaptic cell membrane. Its function is as follows. The muscarinic acetylcholine receptor mediates various cellular responses, including inhibition of adenylate cyclase, breakdown of phosphoinositides and modulation of potassium channels through the action of G proteins. Primary transducing effect is adenylate cyclase inhibition. This chain is Muscarinic acetylcholine receptor M2 (CHRM2), found in Sus scrofa (Pig).